The sequence spans 522 residues: Probable poly(ADP-ribose) glycohydrolase 2 (522 aa).

This sequence belongs to the poly(ADP-ribose) glycohydrolase family.

The catalysed reaction is [(1''-&gt;2')-ADP-alpha-D-ribose](n) + H2O = [(1''-&gt;2')-ADP-alpha-D-ribose](n-1) + ADP-D-ribose. In terms of biological role, poly(ADP-ribose) synthesized after DNA damage is only present transiently and is rapidly degraded by poly(ADP-ribose) glycohydrolase. The chain is Probable poly(ADP-ribose) glycohydrolase 2 (PARG2) from Arabidopsis thaliana (Mouse-ear cress).